A 57-amino-acid polypeptide reads, in one-letter code: Large ribosomal subunit protein bL32 (57 aa).

Residues 1–21 (MAVPKRRTSKKVKNQRRTHKK) are disordered.

Belongs to the bacterial ribosomal protein bL32 family.

The chain is Large ribosomal subunit protein bL32 from Oceanobacillus iheyensis (strain DSM 14371 / CIP 107618 / JCM 11309 / KCTC 3954 / HTE831).